The chain runs to 260 residues: HTH-type transcriptional repressor NanR (260 aa).

Residues 27–95 (KKLSEMVEEE…NGERARVSRP (69 aa)) enclose the HTH gntR-type domain. Positions 55–74 (ERELMAFFNVGRPSVREALA) form a DNA-binding region, H-T-H motif.

The protein belongs to the NanR family.

Its function is as follows. Transcriptional repressor that controls expression of the genes required for the catabolism of sialic acids. This is HTH-type transcriptional repressor NanR from Citrobacter rodentium (strain ICC168) (Citrobacter freundii biotype 4280).